The following is a 265-amino-acid chain: Imidazole glycerol phosphate synthase subunit HisF (265 aa).

Active-site residues include D11 and D130.

It belongs to the HisA/HisF family. As to quaternary structure, heterodimer of HisH and HisF.

Its subcellular location is the cytoplasm. The enzyme catalyses 5-[(5-phospho-1-deoxy-D-ribulos-1-ylimino)methylamino]-1-(5-phospho-beta-D-ribosyl)imidazole-4-carboxamide + L-glutamine = D-erythro-1-(imidazol-4-yl)glycerol 3-phosphate + 5-amino-1-(5-phospho-beta-D-ribosyl)imidazole-4-carboxamide + L-glutamate + H(+). It functions in the pathway amino-acid biosynthesis; L-histidine biosynthesis; L-histidine from 5-phospho-alpha-D-ribose 1-diphosphate: step 5/9. Its function is as follows. IGPS catalyzes the conversion of PRFAR and glutamine to IGP, AICAR and glutamate. The HisF subunit catalyzes the cyclization activity that produces IGP and AICAR from PRFAR using the ammonia provided by the HisH subunit. The polypeptide is Imidazole glycerol phosphate synthase subunit HisF (Idiomarina loihiensis (strain ATCC BAA-735 / DSM 15497 / L2-TR)).